A 463-amino-acid chain; its full sequence is L-seryl-tRNA(Sec) selenium transferase (463 aa).

Lys295 carries the N6-(pyridoxal phosphate)lysine modification.

The protein belongs to the SelA family. As to quaternary structure, homodecamer; pentamer of dimers. Binds only one seryl-tRNA(Sec) per dimer. Requires pyridoxal 5'-phosphate as cofactor.

It localises to the cytoplasm. The enzyme catalyses L-seryl-tRNA(Sec) + selenophosphate + H(+) = L-selenocysteinyl-tRNA(Sec) + phosphate. It functions in the pathway aminoacyl-tRNA biosynthesis; selenocysteinyl-tRNA(Sec) biosynthesis; selenocysteinyl-tRNA(Sec) from L-seryl-tRNA(Sec) (bacterial route): step 1/1. Converts seryl-tRNA(Sec) to selenocysteinyl-tRNA(Sec) required for selenoprotein biosynthesis. The polypeptide is L-seryl-tRNA(Sec) selenium transferase (Shigella flexneri).